A 364-amino-acid chain; its full sequence is UDP-3-O-acylglucosamine N-acyltransferase (364 aa).

Catalysis depends on His-257, which acts as the Proton acceptor.

It belongs to the transferase hexapeptide repeat family. LpxD subfamily. In terms of assembly, homotrimer.

The catalysed reaction is a UDP-3-O-[(3R)-3-hydroxyacyl]-alpha-D-glucosamine + a (3R)-hydroxyacyl-[ACP] = a UDP-2-N,3-O-bis[(3R)-3-hydroxyacyl]-alpha-D-glucosamine + holo-[ACP] + H(+). The protein operates within bacterial outer membrane biogenesis; LPS lipid A biosynthesis. Catalyzes the N-acylation of UDP-3-O-acylglucosamine using 3-hydroxyacyl-ACP as the acyl donor. Is involved in the biosynthesis of lipid A, a phosphorylated glycolipid that anchors the lipopolysaccharide to the outer membrane of the cell. This chain is UDP-3-O-acylglucosamine N-acyltransferase, found in Paracoccus denitrificans (strain Pd 1222).